The sequence spans 307 residues: Ubiquitin recognition factor in ER-associated degradation protein 1 (307 aa).

At M1 the chain carries N-acetylmethionine. A phosphoserine mark is found at S129, S231, S245, S247, and S299. Disordered stretches follow at residues 230-255 and 282-307; these read GSGNRLDGKKKGVEPSPSPIKPGDIK and EEDEAGGRFVAFSGEGQSLRKKGRKP.

Belongs to the UFD1 family. As to quaternary structure, interacts with USP13. Heterodimer with NPLOC4, this heterodimer binds VCP and inhibits Golgi membrane fusion. Interacts with ZFAND2B; probably through VCP.

It localises to the nucleus. The protein localises to the cytoplasm. It is found in the cytosol. It functions in the pathway protein degradation; proteasomal ubiquitin-dependent pathway. In terms of biological role, essential component of the ubiquitin-dependent proteolytic pathway which degrades ubiquitin fusion proteins. The ternary complex containing UFD1, VCP and NPLOC4 binds ubiquitinated proteins and is necessary for the export of misfolded proteins from the ER to the cytoplasm, where they are degraded by the proteasome. The NPLOC4-UFD1-VCP complex regulates spindle disassembly at the end of mitosis and is necessary for the formation of a closed nuclear envelope. It may be involved in the development of some ectoderm-derived structures. Acts as a negative regulator of type I interferon production via the complex formed with VCP and NPLOC4, which binds to RIGI and recruits RNF125 to promote ubiquitination and degradation of RIGI. This chain is Ubiquitin recognition factor in ER-associated degradation protein 1, found in Rattus norvegicus (Rat).